We begin with the raw amino-acid sequence, 505 residues long: Beta-glucosidase 3 (505 aa).

A signal peptide spans 1-22 (MAAAAAFFCALLFISVQHGVLG). Residues Q43 and H143 each coordinate a beta-D-glucoside. E189 functions as the Proton donor in the catalytic mechanism. Residues C208 and C217 are joined by a disulfide bond. An N-linked (GlcNAc...) asparagine glycan is attached at N221. The a beta-D-glucoside site is built by Y333 and E405. Residue E405 is the Nucleophile of the active site. N-linked (GlcNAc...) asparagine glycosylation is found at N415 and N436. Residues W450 and Y466 each contribute to the a beta-D-glucoside site.

The protein belongs to the glycosyl hydrolase 1 family.

The catalysed reaction is Hydrolysis of terminal, non-reducing beta-D-glucosyl residues with release of beta-D-glucose.. The chain is Beta-glucosidase 3 (BGLU3) from Oryza sativa subsp. japonica (Rice).